Here is a 371-residue protein sequence, read N- to C-terminus: uncharacterized protein (371 aa).

It belongs to the serpin family.

This is an uncharacterized protein from Pyrobaculum aerophilum (strain ATCC 51768 / DSM 7523 / JCM 9630 / CIP 104966 / NBRC 100827 / IM2).